An 84-amino-acid chain; its full sequence is Small ribosomal subunit protein bS18A (84 aa).

This sequence belongs to the bacterial ribosomal protein bS18 family. Part of the 30S ribosomal subunit. Forms a tight heterodimer with protein bS6.

Its function is as follows. Binds as a heterodimer with protein bS6 to the central domain of the 16S rRNA, where it helps stabilize the platform of the 30S subunit. This chain is Small ribosomal subunit protein bS18A (rpsR1), found in Mycobacterium bovis (strain ATCC BAA-935 / AF2122/97).